The following is a 96-amino-acid chain: Large ribosomal subunit protein eL43 (96 aa).

The C4-type zinc finger occupies 41-62; the sequence is CPVCAFPKLKRAGTSIWVCEKC.

It belongs to the eukaryotic ribosomal protein eL43 family. Requires Zn(2+) as cofactor.

The chain is Large ribosomal subunit protein eL43 from Methanococcus maripaludis (strain C5 / ATCC BAA-1333).